The following is an 83-amino-acid chain: Small ribosomal subunit protein eS21 (83 aa).

This sequence belongs to the eukaryotic ribosomal protein eS21 family. Component of the 40S small ribosomal subunit. Interacts with sta.

It localises to the cytoplasm. The protein localises to the cytosol. It is found in the rough endoplasmic reticulum. Functionally, may be an associated component of the ribosome rather than a core structural subunit. May act as a translation initiation factor. Has a role in regulation of cell proliferation in the hematopoietic organs and the imaginal disks of larva. The sequence is that of Small ribosomal subunit protein eS21 (RpS21) from Drosophila simulans (Fruit fly).